A 127-amino-acid chain; its full sequence is D-ribose pyranase (127 aa).

Histidine 20 acts as the Proton donor in catalysis. Substrate is bound by residues aspartate 28, histidine 94, and 116–118 (YSN).

The protein belongs to the RbsD / FucU family. RbsD subfamily. Homodecamer.

It is found in the cytoplasm. It catalyses the reaction beta-D-ribopyranose = beta-D-ribofuranose. Its pathway is carbohydrate metabolism; D-ribose degradation; D-ribose 5-phosphate from beta-D-ribopyranose: step 1/2. In terms of biological role, catalyzes the interconversion of beta-pyran and beta-furan forms of D-ribose. The protein is D-ribose pyranase of Cutibacterium acnes (strain DSM 16379 / KPA171202) (Propionibacterium acnes).